Reading from the N-terminus, the 173-residue chain is Large ribosomal subunit protein uL10 (173 aa).

The protein belongs to the universal ribosomal protein uL10 family. As to quaternary structure, part of the ribosomal stalk of the 50S ribosomal subunit. The N-terminus interacts with L11 and the large rRNA to form the base of the stalk. The C-terminus forms an elongated spine to which L12 dimers bind in a sequential fashion forming a multimeric L10(L12)X complex.

Its function is as follows. Forms part of the ribosomal stalk, playing a central role in the interaction of the ribosome with GTP-bound translation factors. The chain is Large ribosomal subunit protein uL10 from Corynebacterium aurimucosum (strain ATCC 700975 / DSM 44827 / CIP 107346 / CN-1) (Corynebacterium nigricans).